A 61-amino-acid chain; its full sequence is UPF0434 protein Sama_1339 (61 aa).

It belongs to the UPF0434 family.

The chain is UPF0434 protein Sama_1339 from Shewanella amazonensis (strain ATCC BAA-1098 / SB2B).